Reading from the N-terminus, the 906-residue chain is Coatomer subunit beta' (906 aa).

WD repeat units follow at residues 13–52 (ARSD…LVKT), 55–94 (VCDL…RVHM), 97–136 (AHSD…SCSQ), 140–180 (GHTH…PNFT), 183–224 (GHEK…CVQT), 227–266 (GHAQ…LEST), 350–388 (SCEI…NKSF), and 390–425 (SAQE…KSFK). An N6-acetyllysine modification is found at Lys-627. The WD 9 repeat unit spans residues 746 to 783 (IRTGRLPEAAFLARTYLPSQVSRVVKLWRENLSKVNQK). Positions 837 to 862 (EEAKGFQPSRSTAQQELDGKPASPTP) are disordered. Ser-859 carries the post-translational modification Phosphoserine. A Phosphothreonine modification is found at Thr-861. Residues 866–890 (ASHTANKEEKSLLELEVDLDNLELE) adopt a coiled-coil conformation.

This sequence belongs to the WD repeat COPB2 family. As to quaternary structure, oligomeric complex that consists of at least the alpha, beta, beta', gamma, delta, epsilon and zeta subunits. Probably interacts with PEX11A. Interacts with SCYL1. Interacts with JAGN1.

It localises to the cytoplasm. It is found in the cytosol. Its subcellular location is the golgi apparatus membrane. The protein resides in the cytoplasmic vesicle. The protein localises to the COPI-coated vesicle membrane. In terms of biological role, the coatomer is a cytosolic protein complex that binds to dilysine motifs and reversibly associates with Golgi non-clathrin-coated vesicles, which further mediate biosynthetic protein transport from the ER, via the Golgi up to the trans Golgi network. Coatomer complex is required for budding from Golgi membranes, and is essential for the retrograde Golgi-to-ER transport of dilysine-tagged proteins. In mammals, the coatomer can only be recruited by membranes associated to ADP-ribosylation factors (ARFs), which are small GTP-binding proteins; the complex also influences the Golgi structural integrity, as well as the processing, activity, and endocytic recycling of LDL receptors. Its function is as follows. This coatomer complex protein, essential for Golgi budding and vesicular trafficking, is a selective binding protein (RACK) for protein kinase C, epsilon type. It binds to Golgi membranes in a GTP-dependent manner. This is Coatomer subunit beta' (COPB2) from Macaca fascicularis (Crab-eating macaque).